A 166-amino-acid chain; its full sequence is Tetranectin-like protein (166 aa).

3 disulfides stabilise this stretch: cysteine 37–cysteine 47, cysteine 64–cysteine 160, and cysteine 136–cysteine 152. The 119-residue stretch at 43 to 161 (IHKKCYLASR…CRSEKRYICE (119 aa)) folds into the C-type lectin domain.

The polypeptide is Tetranectin-like protein (Carcharhinus perezii (Reef shark)).